The primary structure comprises 1158 residues: ATP-dependent helicase/deoxyribonuclease subunit B (1158 aa).

Residues 1–275 (MTLHAYLGRA…QYFNQLYRFN (275 aa)) enclose the UvrD-like helicase ATP-binding domain. Residue 8-15 (GRAGTGKS) coordinates ATP. The UvrD-like helicase C-terminal domain occupies 269 to 583 (NQLYRFNNQD…SIGTMDLAKV (315 aa)). [4Fe-4S] cluster-binding residues include Cys-784, Cys-1112, Cys-1115, and Cys-1121.

The protein belongs to the helicase family. AddB/RexB type 1 subfamily. In terms of assembly, heterodimer of AddA and AddB. Mg(2+) is required as a cofactor. The cofactor is [4Fe-4S] cluster.

Its function is as follows. The heterodimer acts as both an ATP-dependent DNA helicase and an ATP-dependent, dual-direction single-stranded exonuclease. Recognizes the chi site generating a DNA molecule suitable for the initiation of homologous recombination. The AddB subunit has 5' -&gt; 3' nuclease activity but not helicase activity. In Staphylococcus aureus (strain USA300), this protein is ATP-dependent helicase/deoxyribonuclease subunit B.